Consider the following 185-residue polypeptide: Translation initiation factor IF-3 (185 aa).

It belongs to the IF-3 family. As to quaternary structure, monomer.

It localises to the cytoplasm. In terms of biological role, IF-3 binds to the 30S ribosomal subunit and shifts the equilibrium between 70S ribosomes and their 50S and 30S subunits in favor of the free subunits, thus enhancing the availability of 30S subunits on which protein synthesis initiation begins. This Rickettsia typhi (strain ATCC VR-144 / Wilmington) protein is Translation initiation factor IF-3.